We begin with the raw amino-acid sequence, 407 residues long: Na(+)-translocating NADH-quinone reductase subunit F (407 aa).

Residues 6 to 26 form a helical membrane-spanning segment; that stretch reads IFLAIGMFTAIVLGLVAIILV. The region spanning 35 to 127 is the 2Fe-2S ferredoxin-type domain; sequence GDVTIQINGE…DMQIRVPEEV (93 aa). Residues Cys70, Cys76, Cys79, and Cys111 each contribute to the [2Fe-2S] cluster site. The FAD-binding FR-type domain maps to 130–269; the sequence is VKKWECTVES…YGPFGEFFAK (140 aa).

Belongs to the NqrF family. Composed of six subunits; NqrA, NqrB, NqrC, NqrD, NqrE and NqrF. [2Fe-2S] cluster serves as cofactor. FAD is required as a cofactor.

Its subcellular location is the cell inner membrane. The enzyme catalyses a ubiquinone + n Na(+)(in) + NADH + H(+) = a ubiquinol + n Na(+)(out) + NAD(+). Functionally, NQR complex catalyzes the reduction of ubiquinone-1 to ubiquinol by two successive reactions, coupled with the transport of Na(+) ions from the cytoplasm to the periplasm. The first step is catalyzed by NqrF, which accepts electrons from NADH and reduces ubiquinone-1 to ubisemiquinone by a one-electron transfer pathway. This chain is Na(+)-translocating NADH-quinone reductase subunit F, found in Pseudomonas aeruginosa (strain UCBPP-PA14).